Consider the following 274-residue polypeptide: Cytochrome b-c1 complex subunit Rieske, mitochondrial (274 aa).

Residues 79–103 (SHTDIKVPDFSDYRRPEVLDSTKSS) are Mitochondrial matrix-facing. Residues 104–140 (KESSEARKGFSYLVTATTTVGVAYAAKNVVSQFVSSM) form a helical membrane-spanning segment. The Mitochondrial intermembrane segment spans residues 141–274 (SASADVLAMS…FTSDDMVIVG (134 aa)). Positions 187–272 (EAAVEVSQLR…YEFTSDDMVI (86 aa)) constitute a Rieske domain. Residues C217, H219, C236, H239, and S241 each contribute to the [2Fe-2S] cluster site. A disulfide bridge links C222 with C238.

Belongs to the Rieske iron-sulfur protein family. In terms of assembly, component of the ubiquinol-cytochrome c oxidoreductase (cytochrome b-c1 complex, complex III, CIII), a multisubunit enzyme composed of 11 subunits. The complex is composed of 3 respiratory subunits cytochrome b, cytochrome c1 and Rieske protein UQCRFS1, 2 core protein subunits UQCRC1/QCR1 and UQCRC2/QCR2, and 6 low-molecular weight protein subunits UQCRH/QCR6, UQCRB/QCR7, UQCRQ/QCR8, UQCR10/QCR9, UQCR11/QCR10 and subunit 9, the cleavage product of Rieske protein UQCRFS1. The complex exists as an obligatory dimer and forms supercomplexes (SCs) in the inner mitochondrial membrane with NADH-ubiquinone oxidoreductase (complex I, CI) and cytochrome c oxidase (complex IV, CIV), resulting in different assemblies (supercomplex SCI(1)III(2)IV(1) and megacomplex MCI(2)III(2)IV(2)). Incorporation of the Rieske protein UQCRFS1 is the penultimate step in complex III assembly. Interacts with TTC19, which is involved in the clearance of UQCRFS1 fragments. Component of the ubiquinol-cytochrome c oxidoreductase (cytochrome b-c1 complex, complex III, CIII). Subunit 9 corresponds to the mitochondrial targeting sequence (MTS) of Rieske protein UQCRFS1. It is retained after processing and incorporated inside complex III, where it remains bound to the complex and localizes between the 2 core subunits UQCRC1/QCR1 and UQCRC2/QCR2. The cofactor is [2Fe-2S] cluster. In terms of processing, proteolytic processing is necessary for the correct insertion of UQCRFS1 in the complex III dimer. Several fragments are generated during UQCRFS1 insertion, most probably due to the endogenous matrix-processing peptidase (MPP) activity of the 2 core protein subunits UQCRC1/QCR1 and UQCRC2/QCR2, which are homologous to the 2 mitochondrial-processing peptidase (MPP) subunits beta-MPP and alpha-MPP respectively. The action of the protease is also necessary for the clearance of the UQCRFS1 fragments.

It is found in the mitochondrion inner membrane. The enzyme catalyses a quinol + 2 Fe(III)-[cytochrome c](out) = a quinone + 2 Fe(II)-[cytochrome c](out) + 2 H(+)(out). Its function is as follows. Component of the ubiquinol-cytochrome c oxidoreductase, a multisubunit transmembrane complex that is part of the mitochondrial electron transport chain which drives oxidative phosphorylation. The respiratory chain contains 3 multisubunit complexes succinate dehydrogenase (complex II, CII), ubiquinol-cytochrome c oxidoreductase (cytochrome b-c1 complex, complex III, CIII) and cytochrome c oxidase (complex IV, CIV), that cooperate to transfer electrons derived from NADH and succinate to molecular oxygen, creating an electrochemical gradient over the inner membrane that drives transmembrane transport and the ATP synthase. The cytochrome b-c1 complex catalyzes electron transfer from ubiquinol to cytochrome c, linking this redox reaction to translocation of protons across the mitochondrial inner membrane, with protons being carried across the membrane as hydrogens on the quinol. In the process called Q cycle, 2 protons are consumed from the matrix, 4 protons are released into the intermembrane space and 2 electrons are passed to cytochrome c. The Rieske protein is a catalytic core subunit containing a [2Fe-2S] iron-sulfur cluster. It cycles between 2 conformational states during catalysis to transfer electrons from the quinol bound in the Q(0) site in cytochrome b to cytochrome c1. Incorporation of UQCRFS1 is the penultimate step in complex III assembly. In terms of biological role, component of the ubiquinol-cytochrome c oxidoreductase (cytochrome b-c1 complex, complex III, CIII). UQCRFS1 undergoes proteolytic processing once it is incorporated in the complex III dimer. One of the fragments, called subunit 9, corresponds to its mitochondrial targeting sequence (MTS). The proteolytic processing is necessary for the correct insertion of UQCRFS1 in the complex III dimer, but the persistence of UQCRFS1-derived fragments may prevent newly imported UQCRFS1 to be processed and assembled into complex III and is detrimental for the complex III structure and function. The protein is Cytochrome b-c1 complex subunit Rieske, mitochondrial (UQCRFS1) of Bos taurus (Bovine).